Here is a 229-residue protein sequence, read N- to C-terminus: PKHD-type hydroxylase BBta_1313 (229 aa).

In terms of domain architecture, Fe2OG dioxygenase spans 78-180 (HIFPPLFNRY…RIASFFWLQS (103 aa)). His-98, Asp-100, and His-161 together coordinate Fe cation. Position 171 (Arg-171) interacts with 2-oxoglutarate.

Requires Fe(2+) as cofactor. L-ascorbate serves as cofactor.

The protein is PKHD-type hydroxylase BBta_1313 of Bradyrhizobium sp. (strain BTAi1 / ATCC BAA-1182).